Here is a 476-residue protein sequence, read N- to C-terminus: MSYEERVNAHPNLGDESDVEEEALVNDYREQVNFDDGMSELDRTTSLGTGSQTQDLQAQLAAAATPLEYQATLETKFASYDNYCSLFHYILNSEGPVELEVPSYYWAWDVIDEFIYQFESFCRYRNRVARSGSNEEEAQLLRENPNTWGCYSVLNVLYSLIQKSQINEQLAAIKRGEDPLAFAGEYGSRPLYKMLGYFSIIGLLRVHCLLGDFSLALKTLDDIEMNKKAMFARVMAAHFTTYYYVGFSYMMMRRYGDAIRMFSHILVYVSRTKNFQKGGNSYDAIAKKNDQMYALIAICVALHPTRLDDTIHSALREKYGEQLLRLQHGGPDALPLFEELFRSACPKFISPTPPDFDNPALNIDPVDHHTAIFMDEVKNTLYNPTIRSYLKLYTTMDLKKLAGFLEVQPEVLRSWLLVNKQRSRQVRWVEGGLLEGEVVSANDLDYALENDLIHVSETKAGRRLVDWYLRNLARVY.

A PCI domain is found at 257-452; it reads DAIRMFSHIL…DLDYALENDL (196 aa).

The protein belongs to the eIF-3 subunit L family. As to quaternary structure, component of the eukaryotic translation initiation factor 3 (eIF-3) complex.

It is found in the cytoplasm. Functionally, component of the eukaryotic translation initiation factor 3 (eIF-3) complex, which is involved in protein synthesis of a specialized repertoire of mRNAs and, together with other initiation factors, stimulates binding of mRNA and methionyl-tRNAi to the 40S ribosome. The eIF-3 complex specifically targets and initiates translation of a subset of mRNAs involved in cell proliferation. The sequence is that of Eukaryotic translation initiation factor 3 subunit L from Aspergillus fumigatus (strain CBS 144.89 / FGSC A1163 / CEA10) (Neosartorya fumigata).